The sequence spans 300 residues: Ribosomal protein bS6--L-glutamate ligase (300 aa).

Residues 104 to 287 enclose the ATP-grasp domain; sequence MQLLARQGID…IAGKMIRWIE (184 aa). Residues K141, 178–179, D187, and 211–213 each bind ATP; these read EY and RSN. Residues D248, E260, and N262 each coordinate Mg(2+). Positions 248, 260, and 262 each coordinate Mn(2+).

This sequence belongs to the RimK family. It depends on Mg(2+) as a cofactor. The cofactor is Mn(2+).

In terms of biological role, an L-glutamate ligase that catalyzes the ATP-dependent post-translational addition of glutamate residues to the C-terminus of ribosomal protein bS6 (RpsF). Is also able to catalyze the synthesis of poly-alpha-glutamate in vitro, via ATP hydrolysis from unprotected glutamate as substrate. The number of glutamate residues added to either RpsF or to poly-alpha-glutamate changes with pH. The protein is Ribosomal protein bS6--L-glutamate ligase of Shigella flexneri serotype 5b (strain 8401).